Reading from the N-terminus, the 1516-residue chain is MACTTVNVGSCVWVEDPEVAWIDGEVIEVKGSDIKVKCTSGKTVAIKVSSAYPKDVEAPASGVDDMTRLAYLHEPGVLQNMKSRFDINEIYTYTGNILIAVNPFRRLPHLYNNHMMQQYKGAGFGELSPHPFAVADAAYRQMKNQGISQSILVSGESGAGKTETTKLLMQYLADMGGRAVSEGRTVEKKVLESNPVLEAFGNAKTVRNNNSSRFGKFVEIQFDQRGRISGAAIRTYLLERSRVCQVSDPERNYHCFYMLCAAPPEDIKKWKLADPRKFHYLNQSQCIELERMDDAKEYRETRKAMDVVGINSEEQEAIFQVVAAILHLGNVEFGKGKEADSSAPKDDTSNYHLKTAAELFMCDEQALEDSLCKRVIVTRGETITKCLDQESAALSRDALAKTVYSRLFDWIVNKINDSIGQDPDSEYLIGVLDIYGFESFKTNSFEQFCINLTNEKLQQHFNQHVFKMEQDEYNKEEIDWSYIEFVDNQEILDLIEKKAGGIISLLNEACMFPRATHETFAEKMYQTFKDHKHFSKPKLSRTDFTICHYAGDVTYQTEQFLEKNKDYVVAEHQTLLNASRCAFVASLFPLLAEDANKKSKFSSISSRFKQQLVTLLETLSTTEPHYIRCVKPNNLLKPLIFENQNVLQQLRCGGVMEAIRISCAGFPTRKKFEEFLERFSVLAPEVLDKSTDGWPLSSTDDVACKKLLEKVALQGYQIGKTKVFLRAGQMADLDARRNEVLGRAASRIQRKFRSYLSRKTFLMLRKVATNMQAVCRGQLSRLIFEGLRRDAAVLEIQRDIRMHLARKSYKELYFAAVSIQLGIRGMASRGRLRFQRQDKAAIMIQSHCRKFLAQLHYQRLKKAAITTQSAWRARLARKELRKLKMAAKETGVLEAAKSKLEKQVEELTWKLQLEKRMRTDMEESKTQENAKLRSALEEMQLQFKETKALHLQEVEAAKKMAETVPVLQEVPVVDTELVEKLTSENEKLKSLVSSLDQKIDETEKKFEERSKINEERLKQAIEAETTIVNLKTAVHELQEKILDVESENKILRQKSLIQASGHLPPTPVKGSQNGHFSSKESPFNGSEIETLARTQEQESDAKTRRYHLDRQRENIGALINCVVNNIGFNQGKPVAAFTIYKCLLHWKSFEAERTSVFDRLVQMIGSAIKDEGDNEHLAYWLSNTSTLLFMIQQSLKPGATPQQKTPVSTSLFGRMAMGFRSAPSSAETSAAAEAAAAAVIRPVVAKDPALLFKQQLTAYVEKIFGMIRDNLKNELQTLLSLCIQAPRTSTGRSLRSFRSSKTMRNNSPLDHWNGIYDGLNAILSTLQENFVPPVLIQNIFIQTFSFINVQLFNSLLLRRECCTFSNGEFVKSGLALLEEWCNETTEEYAGSSWDELKHIRQAVGFMVIHKKYRISYDDIAHDLCPILSVQQLYRICTLYWDDSYNTRSVSQDVIANMRVLMTEDSNNADSSAFLLDEDSSIPFSADDLSSSMKEKDFAEMKPAEELEENPAFSFLI.

One can recognise a Myosin N-terminal SH3-like domain in the interval 7–56 (NVGSCVWVEDPEVAWIDGEVIEVKGSDIKVKCTSGKTVAIKVSSAYPKDV). Positions 61 to 738 (SGVDDMTRLA…QMADLDARRN (678 aa)) constitute a Myosin motor domain. Residues 155–162 (GESGAGKT) and 208–216 (NNNSSRFGK) contribute to the ATP site. Actin-binding stretches follow at residues 494–528 (LIEK…YQTF), 530–553 (DHKH…AGDV), 588–612 (FPLL…KQQL), and 612–634 (LVTL…KPNN). 6 IQ domains span residues 741–770 (LGRA…VATN), 764–793 (LRKV…DAAV), 789–818 (RDAA…AAVS), 812–841 (LYFA…DKAA), 837–866 (QDKA…AAIT), and 860–889 (LKKA…AAKE). A coiled-coil region spans residues 890 to 1056 (TGVLEAAKSK…ENKILRQKSL (167 aa)). The interval 1061–1085 (GHLPPTPVKGSQNGHFSSKESPFNG) is disordered. Over residues 1069-1084 (KGSQNGHFSSKESPFN) the composition is skewed to polar residues. The Dilute domain occupies 1158-1463 (DRLVQMIGSA…IANMRVLMTE (306 aa)).

It belongs to the TRAFAC class myosin-kinesin ATPase superfamily. Myosin family. Plant myosin class XI subfamily. Homodimer.

Its function is as follows. Myosin heavy chain that is required for the cell cycle-regulated transport of various organelles and proteins for their segregation. Functions by binding with its tail domain to receptor proteins on organelles and exerting force with its N-terminal motor domain against actin filaments, thereby transporting its cargo along polarized actin cables. The sequence is that of Myosin-14 (XI-H) from Arabidopsis thaliana (Mouse-ear cress).